Here is a 200-residue protein sequence, read N- to C-terminus: Probable UbiX-like flavin prenyltransferase (200 aa).

Residues 9–11, Ser36, 87–90, and Arg122 each bind FMN; these read GAT and SMKT.

It belongs to the UbiX/PAD1 family. YclB subfamily. Homododecamer.

The catalysed reaction is dimethylallyl phosphate + FMNH2 = prenylated FMNH2 + phosphate. Functionally, involved in the non-oxidative decarboxylation and detoxification of phenolic derivatives under both aerobic and anaerobic conditions. Flavin prenyltransferase that catalyzes the synthesis of the prenylated FMN cofactor (prenyl-FMN) for phenolic acid decarboxylase. This Streptomyces sp. (strain D7) protein is Probable UbiX-like flavin prenyltransferase.